A 436-amino-acid chain; its full sequence is Cytokine receptor-like factor 3 (436 aa).

Residues 9–87 are a coiled coil; that stretch reads LMQEAWESID…VSAIEQENIK (79 aa). The Fibronectin type-III domain occupies 177–270; sequence PPVQIEELIE…LQTSRTTLVP (94 aa).

The protein belongs to the cytokine receptor-like factor 3 family.

It localises to the cytoplasm. May play a role in the negative regulation of cell cycle progression. This is Cytokine receptor-like factor 3 (crlf3) from Xenopus laevis (African clawed frog).